Reading from the N-terminus, the 160-residue chain is 2-C-methyl-D-erythritol 2,4-cyclodiphosphate synthase (160 aa).

Positions 9 and 11 each coordinate a divalent metal cation. Residues 9–11 (DVH) and 35–36 (HS) each bind 4-CDP-2-C-methyl-D-erythritol 2-phosphate. His-43 lines the a divalent metal cation pocket. 4-CDP-2-C-methyl-D-erythritol 2-phosphate contacts are provided by residues 57–59 (DIG), 62–66 (FPDTD), 101–107 (AQKPKMA), 133–136 (TTTE), Phe-140, and Arg-143.

It belongs to the IspF family. In terms of assembly, homotrimer. It depends on a divalent metal cation as a cofactor.

It carries out the reaction 4-CDP-2-C-methyl-D-erythritol 2-phosphate = 2-C-methyl-D-erythritol 2,4-cyclic diphosphate + CMP. The protein operates within isoprenoid biosynthesis; isopentenyl diphosphate biosynthesis via DXP pathway; isopentenyl diphosphate from 1-deoxy-D-xylulose 5-phosphate: step 4/6. Its function is as follows. Involved in the biosynthesis of isopentenyl diphosphate (IPP) and dimethylallyl diphosphate (DMAPP), two major building blocks of isoprenoid compounds. Catalyzes the conversion of 4-diphosphocytidyl-2-C-methyl-D-erythritol 2-phosphate (CDP-ME2P) to 2-C-methyl-D-erythritol 2,4-cyclodiphosphate (ME-CPP) with a corresponding release of cytidine 5-monophosphate (CMP). The protein is 2-C-methyl-D-erythritol 2,4-cyclodiphosphate synthase of Geobacillus thermodenitrificans (strain NG80-2).